Reading from the N-terminus, the 253-residue chain is Phycoerythrobilin:ferredoxin oxidoreductase (253 aa).

The protein belongs to the HY2 family.

The catalysed reaction is (3Z)-phycoerythrobilin + oxidized 2[4Fe-4S]-[ferredoxin] = 15,16-dihydrobiliverdin + reduced 2[4Fe-4S]-[ferredoxin] + 2 H(+). Its function is as follows. Catalyzes the two-electron reduction of the C2 and C3(1) diene system of 15,16-dihydrobiliverdin. The chain is Phycoerythrobilin:ferredoxin oxidoreductase from Prochlorococcus marinus (strain AS9601).